A 192-amino-acid polypeptide reads, in one-letter code: Pyridoxine/pyridoxamine 5'-phosphate oxidase (192 aa).

FMN is bound by residues 41–46 (RMMLLK), 56–57 (FT), Arg-62, Lys-63, and Gln-85. Lys-46 is a binding site for substrate. The substrate site is built by Tyr-103, Arg-107, and Ser-111. FMN contacts are provided by residues 120 to 121 (QS) and Trp-165. 171–173 (RLH) serves as a coordination point for substrate. FMN is bound at residue Arg-175.

The protein belongs to the pyridoxamine 5'-phosphate oxidase family. In terms of assembly, homodimer. FMN is required as a cofactor.

It carries out the reaction pyridoxamine 5'-phosphate + O2 + H2O = pyridoxal 5'-phosphate + H2O2 + NH4(+). The catalysed reaction is pyridoxine 5'-phosphate + O2 = pyridoxal 5'-phosphate + H2O2. It participates in cofactor metabolism; pyridoxal 5'-phosphate salvage; pyridoxal 5'-phosphate from pyridoxamine 5'-phosphate: step 1/1. It functions in the pathway cofactor metabolism; pyridoxal 5'-phosphate salvage; pyridoxal 5'-phosphate from pyridoxine 5'-phosphate: step 1/1. In terms of biological role, catalyzes the oxidation of either pyridoxine 5'-phosphate (PNP) or pyridoxamine 5'-phosphate (PMP) into pyridoxal 5'-phosphate (PLP). The chain is Pyridoxine/pyridoxamine 5'-phosphate oxidase from Zymomonas mobilis subsp. mobilis (strain ATCC 31821 / ZM4 / CP4).